The sequence spans 371 residues: uncharacterized protein (371 aa).

The protein to E.coli YcjY.

This is an uncharacterized protein from Pseudomonas aeruginosa (strain ATCC 15692 / DSM 22644 / CIP 104116 / JCM 14847 / LMG 12228 / 1C / PRS 101 / PAO1).